Here is a 92-residue protein sequence, read N- to C-terminus: Small ribosomal subunit protein uS19 (92 aa).

Belongs to the universal ribosomal protein uS19 family.

Protein S19 forms a complex with S13 that binds strongly to the 16S ribosomal RNA. This Corynebacterium kroppenstedtii (strain DSM 44385 / JCM 11950 / CIP 105744 / CCUG 35717) protein is Small ribosomal subunit protein uS19.